A 311-amino-acid polypeptide reads, in one-letter code: Pyrimidine-specific ribonucleoside hydrolase RihA (311 aa).

The active site involves H240.

The protein belongs to the IUNH family. RihA subfamily.

In terms of biological role, hydrolyzes cytidine or uridine to ribose and cytosine or uracil, respectively. This chain is Pyrimidine-specific ribonucleoside hydrolase RihA, found in Salmonella enteritidis PT4 (strain P125109).